A 329-amino-acid chain; its full sequence is Sex comb on midleg-like protein 1 (329 aa).

The tract at residues 136-160 is disordered; sequence SYSPTLPVSRRENNSPSNLPRPSFC. Phosphoserine occurs at positions 138 and 238. One can recognise an SAM domain in the interval 258 to 325; it reads WSVEAVVLFL…YYIDRLKQGK (68 aa).

This sequence belongs to the SCM family.

The protein resides in the nucleus. In terms of biological role, putative Polycomb group (PcG) protein. PcG proteins act by forming multiprotein complexes, which are required to maintain the transcriptionally repressive state of homeotic genes throughout development. May be involved in spermatogenesis during sexual maturation. The protein is Sex comb on midleg-like protein 1 (SCML1) of Pongo pygmaeus (Bornean orangutan).